Reading from the N-terminus, the 344-residue chain is BURP domain-containing protein 16 (344 aa).

A signal peptide spans 1–25 (MATSFLFSLILLLITALSLPFPLHA). N-linked (GlcNAc...) asparagine glycosylation is found at Asn90, Asn120, Asn181, and Asn333. Positions 128 to 341 (FFREQELKEG…FNGSMTWVIA (214 aa)) constitute a BURP domain.

Expressed in roots, stems, leaves and panicles.

The protein is BURP domain-containing protein 16 (BURP16) of Oryza sativa subsp. japonica (Rice).